The following is a 442-amino-acid chain: Probable serine/threonine-protein kinase kinase DDB_G0280643 (442 aa).

The 325-residue stretch at 74–398 folds into the Protein kinase domain; sequence IDPNTIVDCG…VNEILESPYF (325 aa). Residues 80-88 and Lys103 each bind ATP; that span reads VDCGTNGIM. Asp231 (proton acceptor) is an active-site residue.

This sequence belongs to the protein kinase superfamily. CMGC Ser/Thr protein kinase family. MAP kinase subfamily.

The enzyme catalyses L-seryl-[protein] + ATP = O-phospho-L-seryl-[protein] + ADP + H(+). It carries out the reaction L-threonyl-[protein] + ATP = O-phospho-L-threonyl-[protein] + ADP + H(+). This chain is Probable serine/threonine-protein kinase kinase DDB_G0280643, found in Dictyostelium discoideum (Social amoeba).